Here is a 480-residue protein sequence, read N- to C-terminus: Nuclear receptor subfamily 6 group A member 1 (480 aa).

Positions 1–32 (MERDEPPPSGGGGGGGSAGFLEPPAALPPPPR) are disordered. A DNA-binding region (nuclear receptor) is located at residues 57-132 (QRTCLICGDR…MGMNRKAIRE (76 aa)). Residues Cys-60, Cys-63, Cys-77, Cys-80, Cys-96, Cys-102, Cys-112, and Cys-115 each coordinate Zn(2+). NR C4-type zinc fingers lie at residues 60-80 (CLIC…CEGC) and 96-120 (CSRD…LLKC). Disordered stretches follow at residues 131-150 (REDG…QISE) and 162-199 (FEEE…LSSS). The segment covering 165 to 177 (EANHWSNHGDSDH) has biased composition (basic and acidic residues). The tract at residues 172–253 (HGDSDHSSPG…RSLDPQSYSL (82 aa)) is sufficient for interaction with UIMC1. A compositionally biased stretch (low complexity) spans 187–199 (SNQPSPGSTLSSS). The 232-residue stretch at 249–480 (QSYSLIHQLL…HSCKTSVGKE (232 aa)) folds into the NR LBD domain.

It belongs to the nuclear hormone receptor family. NR6 subfamily. In terms of assembly, homodimer. Interacts with UIMC1. Shows highest expression in the germ cells of the adult testis.

Its subcellular location is the nucleus. Functionally, orphan nuclear receptor that binds to a response element containing the sequence 5'-TCAAGGTCA-3'. Acts as a regulator of embryonic stem cell pluripotency by mediating repression of POU5F1/OCT4: binds to the DR0 element within the POU5F1/OCT4 promoter and inhibits POU5F1/OCT4 expression during embryonic stem cell differentiation. Involved in the regulation of gene expression in germ cell development during gametogenesis. This is Nuclear receptor subfamily 6 group A member 1 (NR6A1) from Homo sapiens (Human).